Consider the following 232-residue polypeptide: Enolase-phosphatase E1 (232 aa).

The protein belongs to the HAD-like hydrolase superfamily. MasA/MtnC family. As to quaternary structure, monomer. It depends on Mg(2+) as a cofactor.

The enzyme catalyses 5-methylsulfanyl-2,3-dioxopentyl phosphate + H2O = 1,2-dihydroxy-5-(methylsulfanyl)pent-1-en-3-one + phosphate. It participates in amino-acid biosynthesis; L-methionine biosynthesis via salvage pathway; L-methionine from S-methyl-5-thio-alpha-D-ribose 1-phosphate: step 3/6. The protein operates within amino-acid biosynthesis; L-methionine biosynthesis via salvage pathway; L-methionine from S-methyl-5-thio-alpha-D-ribose 1-phosphate: step 4/6. Functionally, bifunctional enzyme that catalyzes the enolization of 2,3-diketo-5-methylthiopentyl-1-phosphate (DK-MTP-1-P) into the intermediate 2-hydroxy-3-keto-5-methylthiopentenyl-1-phosphate (HK-MTPenyl-1-P), which is then dephosphorylated to form the acireductone 1,2-dihydroxy-3-keto-5-methylthiopentene (DHK-MTPene). In Xanthomonas campestris pv. campestris (strain 8004), this protein is Enolase-phosphatase E1.